Here is a 1219-residue protein sequence, read N- to C-terminus: FYVE, RhoGEF and PH domain-containing protein 5 (1219 aa).

Disordered regions lie at residues M1–I85, E94–S113, S201–P227, and G310–V367. Over residues E23–E50 the composition is skewed to acidic residues. Polar residues predominate over residues S201 to S214. Basic and acidic residues predominate over residues R319–N337. The segment covering S346–L356 has biased composition (polar residues). A compositionally biased stretch (low complexity) spans P357 to V367. Residue T555 is modified to Phosphothreonine. Positions E586 to A599 are enriched in low complexity. The segment at E586–G644 is disordered. The segment covering T618 to D630 has biased composition (acidic residues). The segment covering S631–G644 has biased composition (basic and acidic residues). The DH domain maps to R647 to S840. Residues E869–P963 enclose the PH 1 domain. The FYVE-type zinc finger occupies V998–K1057. C1004, C1007, C1020, C1023, C1028, C1031, C1049, and C1052 together coordinate Zn(2+). Positions G1120–V1218 constitute a PH 2 domain.

In terms of tissue distribution, expressed in highly vascularized tissues, such as lung, kidney and ovary.

Its subcellular location is the cytoplasm. It is found in the cytoskeleton. The protein localises to the cell projection. It localises to the ruffle membrane. The protein resides in the endoplasmic reticulum. Its subcellular location is the golgi apparatus. It is found in the early endosome. Its function is as follows. Activates CDC42, a member of the Ras-like family of Rho- and Rac proteins, by exchanging bound GDP for free GTP. Mediates VEGF-induced CDC42 activation. May regulate proangiogenic action of VEGF in vascular endothelial cells, including network formation, directional movement and proliferation. May play a role in regulating the actin cytoskeleton and cell shape. The sequence is that of FYVE, RhoGEF and PH domain-containing protein 5 (Fgd5) from Mus musculus (Mouse).